We begin with the raw amino-acid sequence, 341 residues long: GTPase Obg (341 aa).

Positions 1–159 (MKFLDQAKVY…RAIWLRLKLI (159 aa)) constitute an Obg domain. The region spanning 160 to 327 (ADAGLVGLPN…VLRAGAHIIE (168 aa)) is the OBG-type G domain. GTP contacts are provided by residues 166–173 (GLPNAGKS), 191–195 (FTTLH), 212–215 (DIPG), 279–282 (SQID), and 308–310 (SAV). Mg(2+)-binding residues include Ser-173 and Thr-193.

This sequence belongs to the TRAFAC class OBG-HflX-like GTPase superfamily. OBG GTPase family. As to quaternary structure, monomer. Mg(2+) serves as cofactor.

It is found in the cytoplasm. Functionally, an essential GTPase which binds GTP, GDP and possibly (p)ppGpp with moderate affinity, with high nucleotide exchange rates and a fairly low GTP hydrolysis rate. Plays a role in control of the cell cycle, stress response, ribosome biogenesis and in those bacteria that undergo differentiation, in morphogenesis control. In Bartonella tribocorum (strain CIP 105476 / IBS 506), this protein is GTPase Obg.